The sequence spans 317 residues: Acetyl-coenzyme A carboxylase carboxyl transferase subunit alpha (317 aa).

The region spanning 39–293 (KLEAKAQKAL…KEAVVEALGA (255 aa)) is the CoA carboxyltransferase C-terminal domain.

This sequence belongs to the AccA family. As to quaternary structure, acetyl-CoA carboxylase is a heterohexamer composed of biotin carboxyl carrier protein (AccB), biotin carboxylase (AccC) and two subunits each of ACCase subunit alpha (AccA) and ACCase subunit beta (AccD).

The protein resides in the cytoplasm. It carries out the reaction N(6)-carboxybiotinyl-L-lysyl-[protein] + acetyl-CoA = N(6)-biotinyl-L-lysyl-[protein] + malonyl-CoA. The protein operates within lipid metabolism; malonyl-CoA biosynthesis; malonyl-CoA from acetyl-CoA: step 1/1. Component of the acetyl coenzyme A carboxylase (ACC) complex. First, biotin carboxylase catalyzes the carboxylation of biotin on its carrier protein (BCCP) and then the CO(2) group is transferred by the carboxyltransferase to acetyl-CoA to form malonyl-CoA. The polypeptide is Acetyl-coenzyme A carboxylase carboxyl transferase subunit alpha (Beijerinckia indica subsp. indica (strain ATCC 9039 / DSM 1715 / NCIMB 8712)).